The following is a 79-amino-acid chain: Sec-independent protein translocase protein TatA (79 aa).

The helical transmembrane segment at 1-21 (MGEFSLTHILLLAVIFLIFFG) threads the bilayer. The tract at residues 52 to 79 (DIHDNQQVSHQNKQSMGQTQKQGENQNS) is disordered. Residues 56 to 79 (NQQVSHQNKQSMGQTQKQGENQNS) show a composition bias toward polar residues.

This sequence belongs to the TatA/E family. The Tat system comprises two distinct complexes: a TatABC complex, containing multiple copies of TatA, TatB and TatC subunits, and a separate TatA complex, containing only TatA subunits. Substrates initially bind to the TatABC complex, which probably triggers association of the separate TatA complex to form the active translocon.

The protein localises to the cell inner membrane. In terms of biological role, part of the twin-arginine translocation (Tat) system that transports large folded proteins containing a characteristic twin-arginine motif in their signal peptide across membranes. TatA could form the protein-conducting channel of the Tat system. The sequence is that of Sec-independent protein translocase protein TatA from Bdellovibrio bacteriovorus (strain ATCC 15356 / DSM 50701 / NCIMB 9529 / HD100).